A 500-amino-acid chain; its full sequence is NAD(P)H-quinone oxidoreductase chain 4, chloroplastic (500 aa).

A run of 15 helical transmembrane segments spans residues 4–24 (FPWLTIIVILPIFAGSLIFFL), 35–55 (YTIFICIFELLLTAYTFCYHF), 87–107 (IGPILLTGFITTLATLAAWPV), 113–130 (LFNFLMLAMYSAQIGLFS), 134–154 (LLLFFIMWELELIPVYLLLSM), 167–187 (FILYTAGGSIFLLMGVLGIGL), 211–231 (IIFYIGFFIAFAVKLPIIPLH), 242–262 (HYSTCMLLAGILLKMGAYGLV), 272–292 (AHSIFSPWLLIVGTIQIIYAA), 305–325 (IAYSSVSHMGFIIIGIGSITD), 330–350 (GALLQIISHGFIGAALFFLAG), 364–384 (MGGIAILMPKIFTIFSTFSMA), 386–406 (LALPGMSGFVAELIVFFGIIT), 416–436 (ILITFVMAIGMILTPIYSLSM), and 463–483 (FLSISLFLPVLGIGMYPDFIF).

It belongs to the complex I subunit 4 family.

It localises to the plastid. It is found in the chloroplast thylakoid membrane. It carries out the reaction a plastoquinone + NADH + (n+1) H(+)(in) = a plastoquinol + NAD(+) + n H(+)(out). It catalyses the reaction a plastoquinone + NADPH + (n+1) H(+)(in) = a plastoquinol + NADP(+) + n H(+)(out). This chain is NAD(P)H-quinone oxidoreductase chain 4, chloroplastic, found in Coffea arabica (Arabian coffee).